A 346-amino-acid polypeptide reads, in one-letter code: Very-long-chain 3-oxoacyl-CoA reductase (346 aa).

Residues 19-39 (LIYGVLFVGVYKITTFTLSVG) traverse the membrane as a helical segment. Val65, Asp119, Asn146, Tyr220, Lys224, Val253, and Ser255 together coordinate NADP(+). Catalysis depends on Tyr220, which acts as the Proton donor. The active-site Lowers pKa of active site Tyr is Lys224.

Belongs to the short-chain dehydrogenases/reductases (SDR) family.

The protein localises to the endoplasmic reticulum membrane. The catalysed reaction is a very-long-chain (3R)-3-hydroxyacyl-CoA + NADP(+) = a very-long-chain 3-oxoacyl-CoA + NADPH + H(+). It participates in lipid metabolism; fatty acid biosynthesis. Functionally, component of the microsomal membrane bound fatty acid elongation system, which produces the 26-carbon very long-chain fatty acids (VLCFA) from palmitate. Catalyzes the reduction of the 3-ketoacyl-CoA intermediate that is formed in each cycle of fatty acid elongation. VLCFAs serve as precursors for ceramide and sphingolipids. In Debaryomyces hansenii (strain ATCC 36239 / CBS 767 / BCRC 21394 / JCM 1990 / NBRC 0083 / IGC 2968) (Yeast), this protein is Very-long-chain 3-oxoacyl-CoA reductase.